We begin with the raw amino-acid sequence, 73 residues long: Translation initiation factor IF-1 (73 aa).

The S1-like domain maps to 1 to 73 (MAKKDGVIEI…TRGRIVYRYK (73 aa)).

The protein belongs to the IF-1 family. In terms of assembly, component of the 30S ribosomal translation pre-initiation complex which assembles on the 30S ribosome in the order IF-2 and IF-3, IF-1 and N-formylmethionyl-tRNA(fMet); mRNA recruitment can occur at any time during PIC assembly.

The protein resides in the cytoplasm. Functionally, one of the essential components for the initiation of protein synthesis. Stabilizes the binding of IF-2 and IF-3 on the 30S subunit to which N-formylmethionyl-tRNA(fMet) subsequently binds. Helps modulate mRNA selection, yielding the 30S pre-initiation complex (PIC). Upon addition of the 50S ribosomal subunit IF-1, IF-2 and IF-3 are released leaving the mature 70S translation initiation complex. In Clavibacter michiganensis subsp. michiganensis (strain NCPPB 382), this protein is Translation initiation factor IF-1.